The following is a 554-amino-acid chain: Arginine--tRNA ligase (554 aa).

Positions 132 to 142 match the 'HIGH' region motif; sequence ANPTGPLHIGH.

The protein belongs to the class-I aminoacyl-tRNA synthetase family. Monomer.

It is found in the cytoplasm. It carries out the reaction tRNA(Arg) + L-arginine + ATP = L-arginyl-tRNA(Arg) + AMP + diphosphate. The sequence is that of Arginine--tRNA ligase from Pseudarthrobacter chlorophenolicus (strain ATCC 700700 / DSM 12829 / CIP 107037 / JCM 12360 / KCTC 9906 / NCIMB 13794 / A6) (Arthrobacter chlorophenolicus).